A 77-amino-acid chain; its full sequence is Putative neurotoxin 2 (77 aa).

An N-terminal signal peptide occupies residues 1 to 25 (MKAFIVILSIAIVLLLIVSIKETSA). Residues 26-46 (KDCKQECVKRYTNGDFTNFFK) constitute a propeptide that is removed on maturation.

The protein belongs to the scolopendra neurotoxin 3 family. Post-translationally, contains 2 disulfide bonds. In terms of tissue distribution, expressed by the venom gland.

It is found in the secreted. This chain is Putative neurotoxin 2, found in Scolopendra mutilans (Chinese red-headed centipede).